The following is a 282-amino-acid chain: Undecaprenyl-diphosphatase (282 aa).

The next 8 helical transmembrane spans lie at F2–V22, F47–Y67, W90–F110, L115–I135, I152–T172, F190–L210, A225–I245, and I259–L279.

The protein belongs to the UppP family.

It localises to the cell membrane. It catalyses the reaction di-trans,octa-cis-undecaprenyl diphosphate + H2O = di-trans,octa-cis-undecaprenyl phosphate + phosphate + H(+). Functionally, catalyzes the dephosphorylation of undecaprenyl diphosphate (UPP). Confers resistance to bacitracin. This chain is Undecaprenyl-diphosphatase, found in Leuconostoc citreum (strain KM20).